The sequence spans 238 residues: 3-dehydroquinate dehydratase (238 aa).

3-dehydroquinate-binding positions include Glu-35–Arg-37 and Arg-70. Catalysis depends on His-133, which acts as the Proton donor/acceptor. The active-site Schiff-base intermediate with substrate is Lys-160. The 3-dehydroquinate site is built by Arg-202 and Gln-225.

Belongs to the type-I 3-dehydroquinase family. Homodimer.

It carries out the reaction 3-dehydroquinate = 3-dehydroshikimate + H2O. The protein operates within metabolic intermediate biosynthesis; chorismate biosynthesis; chorismate from D-erythrose 4-phosphate and phosphoenolpyruvate: step 3/7. In terms of biological role, involved in the third step of the chorismate pathway, which leads to the biosynthesis of aromatic amino acids. Catalyzes the cis-dehydration of 3-dehydroquinate (DHQ) and introduces the first double bond of the aromatic ring to yield 3-dehydroshikimate. The chain is 3-dehydroquinate dehydratase from Staphylococcus aureus (strain USA300).